The primary structure comprises 128 residues: Group 2 truncated hemoglobin GlbO (128 aa).

Residues 23-36 (YAQVAEDEVLRRVY) constitute a cross-link (isodityrosine (Tyr-Tyr)). Tyrosine 36 carries the 3',4'-dihydroxyphenylalanine modification. Histidine 75 contacts heme.

The protein belongs to the truncated hemoglobin family. Group II subfamily. Homododecamer. The cofactor is heme. Contains L-DOPA (3',4'-dihydroxyphenylalanine).

The sequence is that of Group 2 truncated hemoglobin GlbO (glbO) from Mycobacterium bovis (strain ATCC BAA-935 / AF2122/97).